A 942-amino-acid chain; its full sequence is MMVMIDFKEIEKKWQKRWEEAKIFEANPDDREKFFITAAFPYLNGVLHAGHLRTFTIPEVVARFQRMKNKNVLWTFGYHVTGTPILGLAELIKNRDEKTIWAYTELHGIPKEELLELTTPEKIVEYFSKKAEEAFKRMGFSLDWRRNFKTDDKVFNKFIEWQFHKLKEKGLIVKGSHPVRYCPRCDNPVEDHDILVGENATLVEYILIKFTTEDGCIMPMATLRPETVFGVTNVWVNPEATYVKAKVYLEKETENGIELIENGIWIMAKECAEKLKHQDRKIEIIEEFKGEQLINKKVKNPVTGKEVPILPAKFVKTNIGTGCVMSVPAHAPYDYIALRDLGLVDEIGLIPLINVPGYGKYPAKEIVEKMGIKSQEEEDKLEEATKKIYKDEFHKGVLNENCLDYEGIPVREIKDKLTKDLIDKGLAEIMYEFSEEKVICRCGTPCIVKMVKGQWFIKYSDEKWKELAHKCIDKMRFIPENLRQVFHEKIDWMKDKACVRRRGLGTKFPFEEGWVIESLSDSTIYPAYYTVAKYINQHNIKPEQLTLELFDYVFLGKGDVDKIAKETGIPKDIIEGMRKEFIYYYPVDWRCSAKDLIPNHLTFYIFNHVAIFPEEFWPRGIVVNGYVTIEGKKLSKSKGPVLPVLEVAEKFGADVGRFYITTCAELPQDADIKFKEMENTKKVLERLYLFAKEIAERRGETGEEFSYIDKWLLSRLYKAVKQYDEYMENFELRKAGILLYQLLDDLKWYRRRGGNNIRVLEEFLEVIIKLMMPFTPHLCEEMWEILGKEGFVSLAKFPEVKEEFINDEIEKGEEYLKAVMEDIKEIINVAKVQPKRIYLYTADDWKYEILKIIKENEGKTIKELMPIIMKNPEFRKYGKEIPKLVNQLIKLNAEIINEVEVLENAKEFLKKEVGVEDIIINGEDKANKKRVAIPFKPAIYLE.

The short motif at 41–51 is the 'HIGH' region element; the sequence is PYLNGVLHAGH. A 'KMSKS' region motif is present at residues 633–637; sequence KLSKS. Lysine 636 serves as a coordination point for ATP.

The protein belongs to the class-I aminoacyl-tRNA synthetase family.

The protein resides in the cytoplasm. The catalysed reaction is tRNA(Leu) + L-leucine + ATP = L-leucyl-tRNA(Leu) + AMP + diphosphate. The sequence is that of Leucine--tRNA ligase from Methanocaldococcus jannaschii (strain ATCC 43067 / DSM 2661 / JAL-1 / JCM 10045 / NBRC 100440) (Methanococcus jannaschii).